Here is a 336-residue protein sequence, read N- to C-terminus: Tyrosine phosphatase-like protein H1 (336 aa).

The Tyrosine-protein phosphatase domain occupies 27 to 295; the sequence is IKKEHHKLMK…EICYRVLCEA (269 aa).

The protein belongs to the protein-tyrosine phosphatase family.

In Microplitis demolitor (Parasitoid wasp), this protein is Tyrosine phosphatase-like protein H1 (H1).